Here is a 216-residue protein sequence, read N- to C-terminus: MSASTSPLIRQRGRESYEITYAAMRAFTDARTAQTADELWIVEHPPVFTLGLAADPTHVLDAHDIPVVQTDRGGEVTYHGPGQVVIYLLLDLRRNHADARIFARELVNKIEQAVIDTLAAYNLACERKAGAPGIYLSDGPLQGAKIAALGLKIRGNGCTYHGVSLNVAMDLTPFSWINPCGYEGLVTIDMQSLGAQTTLTAVQDTLAEKLTRHLSG.

One can recognise a BPL/LPL catalytic domain in the interval 33-216; sequence AQTADELWIV…AEKLTRHLSG (184 aa). Residues 72–79, 148–150, and 162–164 contribute to the substrate site; these read RGGEVTYH, ALG, and GVS. The Acyl-thioester intermediate role is filled by Cys-180.

Belongs to the LipB family.

The protein resides in the cytoplasm. The catalysed reaction is octanoyl-[ACP] + L-lysyl-[protein] = N(6)-octanoyl-L-lysyl-[protein] + holo-[ACP] + H(+). It functions in the pathway protein modification; protein lipoylation via endogenous pathway; protein N(6)-(lipoyl)lysine from octanoyl-[acyl-carrier-protein]: step 1/2. In terms of biological role, catalyzes the transfer of endogenously produced octanoic acid from octanoyl-acyl-carrier-protein onto the lipoyl domains of lipoate-dependent enzymes. Lipoyl-ACP can also act as a substrate although octanoyl-ACP is likely to be the physiological substrate. The chain is Octanoyltransferase from Herminiimonas arsenicoxydans.